A 388-amino-acid chain; its full sequence is Ferrochelatase (388 aa).

The Fe cation site is built by H196 and E277.

The protein belongs to the ferrochelatase family.

It is found in the cytoplasm. The catalysed reaction is heme b + 2 H(+) = protoporphyrin IX + Fe(2+). The protein operates within porphyrin-containing compound metabolism; protoheme biosynthesis; protoheme from protoporphyrin-IX: step 1/1. In terms of biological role, catalyzes the ferrous insertion into protoporphyrin IX. This Nostoc punctiforme (strain ATCC 29133 / PCC 73102) protein is Ferrochelatase.